The sequence spans 513 residues: Na(+)/H(+) antiporter NhaB (513 aa).

Transmembrane regions (helical) follow at residues 23–43, 52–72, 97–117, 120–140, 144–164, 202–222, 238–258, 303–323, 348–368, 391–411, 447–467, and 475–495; these read LALI…PFVA, IFTL…LLAI, LLLM…LFIF, LLLS…AAAF, FLDA…FYGI, LMMH…VGEP, FFLR…LTCL, AIIG…VGLI, TESL…AVII, LFYI…VGTI, ATPN…APLI, and VWMA…CVEF.

This sequence belongs to the NhaB Na(+)/H(+) (TC 2.A.34) antiporter family.

Its subcellular location is the cell inner membrane. It catalyses the reaction 2 Na(+)(in) + 3 H(+)(out) = 2 Na(+)(out) + 3 H(+)(in). In terms of biological role, na(+)/H(+) antiporter that extrudes sodium in exchange for external protons. In Escherichia coli O45:K1 (strain S88 / ExPEC), this protein is Na(+)/H(+) antiporter NhaB.